The chain runs to 501 residues: Lysine--tRNA ligase (501 aa).

Mg(2+)-binding residues include Glu411 and Glu418.

This sequence belongs to the class-II aminoacyl-tRNA synthetase family. Homodimer. Mg(2+) serves as cofactor.

The protein localises to the cytoplasm. It catalyses the reaction tRNA(Lys) + L-lysine + ATP = L-lysyl-tRNA(Lys) + AMP + diphosphate. The protein is Lysine--tRNA ligase of Thiobacillus denitrificans (strain ATCC 25259 / T1).